The chain runs to 156 residues: Ribonuclease pancreatic (156 aa).

A signal peptide spans 1–28 (MALEKSLALLPLLVLVLLVLGWVQPSLG). Residues 33 to 43 (AQKFQRQHMDS) are compositionally biased toward basic and acidic residues. The segment at 33–52 (AQKFQRQHMDSDGSPSSNPT) is disordered. Substrate-binding residues include K35 and R38. Catalysis depends on H40, which acts as the Proton acceptor. 4 disulfide bridges follow: C54–C112, C68–C123, C86–C138, and C93–C100. A glycan (N-linked (GlcNAc...) asparagine) is linked at N62. Residues 69–73 (KPVNT), K94, and R113 each bind substrate. N116 is a glycosylation site (N-linked (GlcNAc...) asparagine). The active-site Proton donor is the H147.

It belongs to the pancreatic ribonuclease family. As to quaternary structure, monomer. Interacts with and forms tight 1:1 complexes with RNH1. Dimerization of two such complexes may occur. Interaction with RNH1 inhibits this protein.

The protein resides in the secreted. It carries out the reaction an [RNA] containing cytidine + H2O = an [RNA]-3'-cytidine-3'-phosphate + a 5'-hydroxy-ribonucleotide-3'-[RNA].. It catalyses the reaction an [RNA] containing uridine + H2O = an [RNA]-3'-uridine-3'-phosphate + a 5'-hydroxy-ribonucleotide-3'-[RNA].. Its function is as follows. Endonuclease that catalyzes the cleavage of RNA on the 3' side of pyrimidine nucleotides. Acts on single-stranded and double-stranded RNA. The chain is Ribonuclease pancreatic (RNASE1) from Saguinus oedipus (Cotton-top tamarin).